The primary structure comprises 658 residues: Carnitine O-palmitoyltransferase 2, mitochondrial (658 aa).

The transit peptide at 1-25 (MVARLLLRSWSRGLAVGPGAPCRPL) directs the protein to the mitochondrion. Over 26–178 (STGFEPSQYL…DLLEPEVFHL (153 aa)) the chain is Mitochondrial matrix. K69 carries the post-translational modification N6-succinyllysine. K79 carries the N6-acetyllysine modification. An N6-succinyllysine modification is found at K85. The segment at residues 179–208 (NPAKSDTDTFKRFIRFVPSFLSWYGAYLVN) is an intramembrane region (note=Mitochondrial inner membrane). Topologically, residues 209–658 (AYPLDMSQYY…DALEGKMIKT (450 aa)) are mitochondrial matrix. At K239 the chain carries N6-acetyllysine; alternate. An N6-succinyllysine; alternate modification is found at K239. H372 functions as the Proton acceptor in the catalytic mechanism. Position 418 is an N6-acetyllysine; alternate (K418). Residue K418 is modified to N6-succinyllysine; alternate. 2 positions are modified to N6-succinyllysine: K424 and K439. Residue 452 to 464 (GREFLKKQKLSPD) coordinates CoA. Residues Y486, S488, and T499 each coordinate (R)-carnitine. K510 is modified (N6-acetyllysine; alternate). K510 is modified (N6-succinyllysine; alternate).

It belongs to the carnitine/choline acetyltransferase family.

It localises to the mitochondrion inner membrane. The catalysed reaction is (R)-carnitine + hexadecanoyl-CoA = O-hexadecanoyl-(R)-carnitine + CoA. It carries out the reaction octanoyl-CoA + (R)-carnitine = O-octanoyl-(R)-carnitine + CoA. It catalyses the reaction decanoyl-CoA + (R)-carnitine = O-decanoyl-(R)-carnitine + CoA. The enzyme catalyses dodecanoyl-CoA + (R)-carnitine = O-dodecanoyl-R-carnitine + CoA. The catalysed reaction is tetradecanoyl-CoA + (R)-carnitine = O-tetradecanoyl-(R)-carnitine + CoA. It carries out the reaction (R)-carnitine + octadecanoyl-CoA = O-octadecanoyl-(R)-carnitine + CoA. It catalyses the reaction eicosanoyl-CoA + (R)-carnitine = O-eicosanoyl-(R)-carnitine + CoA. The enzyme catalyses (9Z)-tetradecenoyl-CoA + (R)-carnitine = O-(9Z)-tetradecenoyl-(R)-carnitine + CoA. The catalysed reaction is (5Z)-tetradecenoyl-CoA + (R)-carnitine = O-(5Z)-tetradecenoyl-(R)-carnitine + CoA. It carries out the reaction (R)-carnitine + (9Z)-octadecenoyl-CoA = O-(9Z)-octadecenoyl-(R)-carnitine + CoA. It catalyses the reaction 4,8-dimethylnonanoyl-CoA + (R)-carnitine = O-4,8-dimethylnonanoyl-(R)-carnitine + CoA. It functions in the pathway lipid metabolism; fatty acid beta-oxidation. In terms of biological role, involved in the intramitochondrial synthesis of acylcarnitines from accumulated acyl-CoA metabolites. Reconverts acylcarnitines back into the respective acyl-CoA esters that can then undergo beta-oxidation, an essential step for the mitochondrial uptake of long-chain fatty acids and their subsequent beta-oxidation in the mitochondrion. Active with medium (C8-C12) and long-chain (C14-C18) acyl-CoA esters. This chain is Carnitine O-palmitoyltransferase 2, mitochondrial (CPT2), found in Bos taurus (Bovine).